The sequence spans 239 residues: ATP-dependent dethiobiotin synthetase BioD (239 aa).

15-20 (EIGKTF) provides a ligand contact to ATP. Residue Thr-19 coordinates Mg(2+). Lys-40 is a catalytic residue. ATP is bound by residues Asp-57, 118–121 (EGVG), and 178–179 (NH). The Mg(2+) site is built by Asp-57 and Glu-118.

The protein belongs to the dethiobiotin synthetase family. As to quaternary structure, homodimer. Mg(2+) serves as cofactor.

The protein resides in the cytoplasm. It catalyses the reaction (7R,8S)-7,8-diammoniononanoate + CO2 + ATP = (4R,5S)-dethiobiotin + ADP + phosphate + 3 H(+). It participates in cofactor biosynthesis; biotin biosynthesis; biotin from 7,8-diaminononanoate: step 1/2. Its function is as follows. Catalyzes a mechanistically unusual reaction, the ATP-dependent insertion of CO2 between the N7 and N8 nitrogen atoms of 7,8-diaminopelargonic acid (DAPA, also called 7,8-diammoniononanoate) to form a ureido ring. The sequence is that of ATP-dependent dethiobiotin synthetase BioD from Burkholderia cenocepacia (strain HI2424).